Consider the following 960-residue polypeptide: Isoleucine--tRNA ligase (960 aa).

Positions 60-70 match the 'HIGH' region motif; sequence PYANGSLHIGH. Residue Glu-573 coordinates L-isoleucyl-5'-AMP. The 'KMSKS' region motif lies at 614–618; that stretch reads KMSKS. Residue Lys-617 participates in ATP binding. Positions 929, 932, 949, and 952 each coordinate Zn(2+).

This sequence belongs to the class-I aminoacyl-tRNA synthetase family. IleS type 1 subfamily. As to quaternary structure, monomer. Zn(2+) serves as cofactor.

Its subcellular location is the cytoplasm. The enzyme catalyses tRNA(Ile) + L-isoleucine + ATP = L-isoleucyl-tRNA(Ile) + AMP + diphosphate. Functionally, catalyzes the attachment of isoleucine to tRNA(Ile). As IleRS can inadvertently accommodate and process structurally similar amino acids such as valine, to avoid such errors it has two additional distinct tRNA(Ile)-dependent editing activities. One activity is designated as 'pretransfer' editing and involves the hydrolysis of activated Val-AMP. The other activity is designated 'posttransfer' editing and involves deacylation of mischarged Val-tRNA(Ile). This chain is Isoleucine--tRNA ligase, found in Nostoc sp. (strain PCC 7120 / SAG 25.82 / UTEX 2576).